Reading from the N-terminus, the 278-residue chain is Diaminopimelate epimerase (278 aa).

Asn-11 and Asn-63 together coordinate substrate. Cys-72 functions as the Proton donor in the catalytic mechanism. Substrate is bound by residues 73-74 (GN), Asn-160, Asn-193, and 211-212 (ER). Cys-220 (proton acceptor) is an active-site residue. Position 221–222 (221–222 (GT)) interacts with substrate.

The protein belongs to the diaminopimelate epimerase family. As to quaternary structure, homodimer.

Its subcellular location is the cytoplasm. The enzyme catalyses (2S,6S)-2,6-diaminopimelate = meso-2,6-diaminopimelate. It functions in the pathway amino-acid biosynthesis; L-lysine biosynthesis via DAP pathway; DL-2,6-diaminopimelate from LL-2,6-diaminopimelate: step 1/1. Functionally, catalyzes the stereoinversion of LL-2,6-diaminopimelate (L,L-DAP) to meso-diaminopimelate (meso-DAP), a precursor of L-lysine and an essential component of the bacterial peptidoglycan. The protein is Diaminopimelate epimerase of Desulforudis audaxviator (strain MP104C).